Consider the following 455-residue polypeptide: Mycosin-4 (455 aa).

The first 25 residues, 1–25 (MTTSRTLRLLVVSALATLSGLGTPV), serve as a signal peptide directing secretion. The region spanning 74–384 (SAQLADLDQV…NGTVDALAAV (311 aa)) is the Peptidase S8 domain. Residues Asp98, His129, and Ser329 each act as charge relay system in the active site. Positions 389–417 (IPQAGTATSDPAPVAVPVPRRSTPGPSDR) are disordered. The span at 394 to 412 (TATSDPAPVAVPVPRRSTP) shows a compositional bias: low complexity. Residues 432 to 452 (LALMATLATASRRLRPGRNGI) traverse the membrane as a helical segment.

The protein belongs to the peptidase S8 family.

It localises to the cell membrane. The chain is Mycosin-4 from Mycobacterium tuberculosis (strain ATCC 25618 / H37Rv).